A 466-amino-acid polypeptide reads, in one-letter code: Glutamate--tRNA ligase (466 aa).

A 'HIGH' region motif is present at residues 11-21 (PSPTGFIHLGN). Residues 243–247 (KMSKR) carry the 'KMSKS' region motif. Residue lysine 246 participates in ATP binding.

Belongs to the class-I aminoacyl-tRNA synthetase family. Glutamate--tRNA ligase type 1 subfamily. Monomer.

It is found in the cytoplasm. The catalysed reaction is tRNA(Glu) + L-glutamate + ATP = L-glutamyl-tRNA(Glu) + AMP + diphosphate. Functionally, catalyzes the attachment of glutamate to tRNA(Glu) in a two-step reaction: glutamate is first activated by ATP to form Glu-AMP and then transferred to the acceptor end of tRNA(Glu). The chain is Glutamate--tRNA ligase from Cupriavidus necator (strain ATCC 17699 / DSM 428 / KCTC 22496 / NCIMB 10442 / H16 / Stanier 337) (Ralstonia eutropha).